Consider the following 57-residue polypeptide: Large ribosomal subunit protein bL33 (57 aa).

It belongs to the bacterial ribosomal protein bL33 family.

This chain is Large ribosomal subunit protein bL33, found in Shewanella halifaxensis (strain HAW-EB4).